We begin with the raw amino-acid sequence, 387 residues long: Succinate--CoA ligase [ADP-forming] subunit beta (387 aa).

The 236-residue stretch at 9–244 (KHILSKFGVN…YDEEIKEEIE (236 aa)) folds into the ATP-grasp domain. ATP-binding positions include Lys46, 53-55 (GRG), Glu99, Cys102, and Glu107. Positions 199 and 213 each coordinate Mg(2+). Residues Asn264 and 321–323 (GIM) contribute to the substrate site.

The protein belongs to the succinate/malate CoA ligase beta subunit family. As to quaternary structure, heterotetramer of two alpha and two beta subunits. Requires Mg(2+) as cofactor.

The enzyme catalyses succinate + ATP + CoA = succinyl-CoA + ADP + phosphate. The catalysed reaction is GTP + succinate + CoA = succinyl-CoA + GDP + phosphate. Its pathway is carbohydrate metabolism; tricarboxylic acid cycle; succinate from succinyl-CoA (ligase route): step 1/1. Its function is as follows. Succinyl-CoA synthetase functions in the citric acid cycle (TCA), coupling the hydrolysis of succinyl-CoA to the synthesis of either ATP or GTP and thus represents the only step of substrate-level phosphorylation in the TCA. The beta subunit provides nucleotide specificity of the enzyme and binds the substrate succinate, while the binding sites for coenzyme A and phosphate are found in the alpha subunit. This is Succinate--CoA ligase [ADP-forming] subunit beta from Ehrlichia chaffeensis (strain ATCC CRL-10679 / Arkansas).